Here is a 255-residue protein sequence, read N- to C-terminus: Hydroxyacylglutathione hydrolase (255 aa).

Positions 56, 58, 60, 61, 114, 133, and 171 each coordinate Zn(2+).

It belongs to the metallo-beta-lactamase superfamily. Glyoxalase II family. As to quaternary structure, monomer. The cofactor is Zn(2+).

It carries out the reaction an S-(2-hydroxyacyl)glutathione + H2O = a 2-hydroxy carboxylate + glutathione + H(+). It participates in secondary metabolite metabolism; methylglyoxal degradation; (R)-lactate from methylglyoxal: step 2/2. Its function is as follows. Thiolesterase that catalyzes the hydrolysis of S-D-lactoyl-glutathione to form glutathione and D-lactic acid. This chain is Hydroxyacylglutathione hydrolase, found in Mesorhizobium japonicum (strain LMG 29417 / CECT 9101 / MAFF 303099) (Mesorhizobium loti (strain MAFF 303099)).